A 602-amino-acid chain; its full sequence is MQSETLLETLQNLPDQSGVYHYFDSRSKLLYVGKAKSLKKRVKSYFQFTPTLAPSPKLSPRIHKMISEAAFIRYIVVENEHDALILENSLIKQLKPKYNILLRDDKTYPYIYFDENESFPRLEITRKILPHKGVRYFGPYTTGARELLESLYELLPLVQKKGCLKAQKACLFYQIHRCLAPCESKISKERYGEIFKEALGLLQNHSKLISRLKERMEKLAENLRFEEAGELRDRIEKIKRIEAFSGIDLARLEDLDILAIATSGKHSMLTRLFMREGKVVSSTSTPLKAQEGLDEEEAYRRAILHYYDSFMPLPPKQILLPLELESKRELEAHLEGLFGRKIPLHHPKQGSKKALIDLALKNAEELLRLEGEKEEIPLLESLQELLGLESLPRRIEAFDTSHLRGEACVGAMVVYEEGFCKESYRRYALEGRDEYSQMREMLGRRAEAFDRESPPDLWLLDGGLGQIRLAQEIIESLGANVEIIAIAKEKIDAKAHRAKGAAKDILRTPTEEIRLLPSDKRLQLLQKIRDEVHRFAITYHRQQKLKKDRQIDLLEIKGIKKGKLKRLLDFFGSFEAIREASFEELCKVVSEGEARAILEASF.

The GIY-YIG domain occupies Asp15–Ile100. Residues Ser206 to Ile241 enclose the UVR domain.

This sequence belongs to the UvrC family. In terms of assembly, interacts with UvrB in an incision complex.

It localises to the cytoplasm. In terms of biological role, the UvrABC repair system catalyzes the recognition and processing of DNA lesions. UvrC both incises the 5' and 3' sides of the lesion. The N-terminal half is responsible for the 3' incision and the C-terminal half is responsible for the 5' incision. The sequence is that of UvrABC system protein C from Wolinella succinogenes (strain ATCC 29543 / DSM 1740 / CCUG 13145 / JCM 31913 / LMG 7466 / NCTC 11488 / FDC 602W) (Vibrio succinogenes).